The primary structure comprises 226 residues: NEDD8-specific protease 1 (226 aa).

The protein belongs to the peptidase C48 family.

Functionally, processes the pre-form of the ubiquitin-like protein NEDD8/RUB1. Has the capacity to discriminate between NEDD8/RUB1 and ubiquitin. Has no SUMO protease activity. This Arabidopsis thaliana (Mouse-ear cress) protein is NEDD8-specific protease 1 (NEDP1).